A 136-amino-acid chain; its full sequence is Large ribosomal subunit protein uL14 (136 aa).

Belongs to the universal ribosomal protein uL14 family.

In Dictyostelium discoideum (Social amoeba), this protein is Large ribosomal subunit protein uL14 (rpl23).